Consider the following 183-residue polypeptide: Microfibrillar-associated protein 2 (183 aa).

The N-terminal stretch at 1–17 (MRAASLFLLFLPAGLLA) is a signal peptide. At Gln-18 the chain carries Pyrrolidone carboxylic acid. Residue Gln-20 forms an Isoglutamyl lysine isopeptide (Gln-Lys) (interchain with K-?) linkage. 3 positions are modified to sulfotyrosine: Tyr-47, Tyr-48, and Tyr-50. Residues 153–183 (CRDKFSKCGVLASSGLCQSVAAACARSCGGC) enclose the ShKT domain. 3 cysteine pairs are disulfide-bonded: Cys-153–Cys-183, Cys-160–Cys-176, and Cys-169–Cys-180.

It belongs to the MFAP family. In terms of assembly, forms a ternary complex with BGN and ELN. Interacts with FBN1 (via N-terminal domain) and FBN2. In terms of processing, O-glycosylated; glycans consist of Gal(beta1-3)GalNAc. Post-translationally, forms intermolecular disulfide bonds either with other MAGP-1 molecules or with other components of the microfibrils. Forms transglutaminase cross-links with tropoelastin.

It is found in the secreted. Its subcellular location is the extracellular space. It localises to the extracellular matrix. In terms of biological role, component of the elastin-associated microfibrils. This Bos taurus (Bovine) protein is Microfibrillar-associated protein 2 (MFAP2).